Consider the following 183-residue polypeptide: Hypoxanthine/guanine phosphoribosyltransferase (183 aa).

This sequence belongs to the purine/pyrimidine phosphoribosyltransferase family. Archaeal HPRT subfamily. In terms of assembly, homodimer.

The protein resides in the cytoplasm. The catalysed reaction is IMP + diphosphate = hypoxanthine + 5-phospho-alpha-D-ribose 1-diphosphate. The enzyme catalyses GMP + diphosphate = guanine + 5-phospho-alpha-D-ribose 1-diphosphate. It participates in purine metabolism; IMP biosynthesis via salvage pathway; IMP from hypoxanthine: step 1/1. Catalyzes a salvage reaction resulting in the formation of IMP that is energically less costly than de novo synthesis. This Methanocaldococcus vulcanius (strain ATCC 700851 / DSM 12094 / M7) (Methanococcus vulcanius) protein is Hypoxanthine/guanine phosphoribosyltransferase.